The chain runs to 433 residues: Enolase (433 aa).

Glutamine 166 provides a ligand contact to (2R)-2-phosphoglycerate. The active-site Proton donor is the glutamate 208. Positions 245, 290, and 317 each coordinate Mg(2+). Residues lysine 342, arginine 371, serine 372, and lysine 393 each coordinate (2R)-2-phosphoglycerate. Lysine 342 functions as the Proton acceptor in the catalytic mechanism.

The protein belongs to the enolase family. The cofactor is Mg(2+).

The protein localises to the cytoplasm. The protein resides in the secreted. It localises to the cell surface. It catalyses the reaction (2R)-2-phosphoglycerate = phosphoenolpyruvate + H2O. It functions in the pathway carbohydrate degradation; glycolysis; pyruvate from D-glyceraldehyde 3-phosphate: step 4/5. Functionally, catalyzes the reversible conversion of 2-phosphoglycerate (2-PG) into phosphoenolpyruvate (PEP). It is essential for the degradation of carbohydrates via glycolysis. The sequence is that of Enolase from Clostridium novyi (strain NT).